We begin with the raw amino-acid sequence, 284 residues long: NAD kinase (284 aa).

Asp-70 functions as the Proton acceptor in the catalytic mechanism. NAD(+)-binding positions include 70-71 (DG), 139-140 (NE), Lys-167, Asp-169, Leu-177, 180-185 (TAYNLS), and Gln-236.

It belongs to the NAD kinase family. The cofactor is a divalent metal cation.

The protein resides in the cytoplasm. It catalyses the reaction NAD(+) + ATP = ADP + NADP(+) + H(+). Its function is as follows. Involved in the regulation of the intracellular balance of NAD and NADP, and is a key enzyme in the biosynthesis of NADP. Catalyzes specifically the phosphorylation on 2'-hydroxyl of the adenosine moiety of NAD to yield NADP. The sequence is that of NAD kinase from Helicobacter pylori (strain P12).